Consider the following 634-residue polypeptide: MSTEISTRGRQRAIGHEEYSLYSSLSEEELVQMAIEQSLADKTRGPTPAETSVSSQTNHQPGHIHPWTRSSSPPESPPARAPLGLFQGVMQKYSSNLFKTSQMAAMDPVLKAIKEGDEEALKAMIQDGKNLAEPNKEGWLPLHEAAYYGKLGCLKVLQRAYPGTIDQRTLQEETALYLATCREHLDCLLSLLQAGAEPDISNKSRETPLYKACERKNAEAVRILVQYNADANHRCNRGWTALHESVSRNDLEVMEILVSGGAKVEAKNVYSITPLFVAAQSGQLEALRFLAKHGADINTQASDSASALYEACKNEHEDVVEFLLSQGADANKANKDGLLPLHVASKKGNYRIVQMLLPVTSRTRVRRSGISPLHLAAERNHDAVLEALLAARFDVNTPLAPERARLYEDRRTSALYFAVVNNNVYATELLLLAGADPNRDVISPLLVAIRHGCLRTMQLLLDHGANIDAYIATHPTAFPATIMFAMKCLSLLKFLMDLGCDGEPCFSCLYGNGPHPPAPRSGRFNDAPVDDKAPSVVQFCEFLSAPEVSRWAGPIIDVLLDYVGNVQLCSRLKEHIDSFEDWAVIKEKAEPPRPLAHLCRLRVRKAIGKYRIKLLDTLPLPGRLIRYLKYENTQ.

The region spanning 26–45 (SEEELVQMAIEQSLADKTRG) is the UIM domain. Positions 35–81 (IEQSLADKTRGPTPAETSVSSQTNHQPGHIHPWTRSSSPPESPPARA) are disordered. Polar residues predominate over residues 49 to 60 (AETSVSSQTNHQ). 12 ANK repeats span residues 104-133 (AAMD…NLAE), 137-167 (EGWL…TIDQ), 171-200 (QEET…EPDI), 204-233 (SRET…DANH), 237-266 (RGWT…KVEA), 270-299 (YSIT…DINT), 303-332 (DSAS…DANK), 336-365 (DGLL…RTRV), 368-397 (SGIS…DVNT), 410-439 (RRTS…DPNR), 440-469 (DVIS…NIDA), and 476-504 (TAFP…DGEP). Phosphoserine is present on serine 371. One can recognise an SOCS box domain in the interval 580 to 634 (EDWAVIKEKAEPPRPLAHLCRLRVRKAIGKYRIKLLDTLPLPGRLIRYLKYENTQ).

This sequence belongs to the ankyrin SOCS box (ASB) family. As to quaternary structure, component of a probable ECS E3 ubiquitin-protein ligase complex which contains CUL5, either RBX1 or RNF7/RBX2, Elongin BC complex (ELOB and ELOC) and ASB2. Interacts with SKP2. Through its interaction with SKP2, likely to bridge the formation of dimeric E3-ubiquitin-protein ligase complexes composed of an ECS complex and an SCF(SKP2) complex. Interacts with JAK2; the interaction targets JAK2 for Notch-mediated proteasomal degradation. Interacts with TCF3/E2A; the interaction is mediated by SKP2 and targets TCF3 for Notch-mediated proteasomal degradation. Interacts with DES. In terms of processing, monoubiquitinated.

The protein localises to the cytoplasm. It localises to the cytoskeleton. The protein resides in the stress fiber. It is found in the myofibril. Its subcellular location is the sarcomere. The protein localises to the z line. Its pathway is protein modification; protein ubiquitination. Functionally, substrate-recognition component of a SCF-like ECS (Elongin-Cullin-SOCS-box protein) E3 ubiquitin-protein ligase complex which mediates the ubiquitination and subsequent proteasomal degradation of target proteins. Mediates Notch-induced ubiquitination and degradation of substrates including E2A and JAK2. Required during embryonic heart development for complete heart looping. Required for cardiomyocyte differentiation. Involved in myogenic differentiation and targets filamin FLNB for proteasomal degradation but not filamin FLNA. Also targets DES for proteasomal degradation. Acts as a negative regulator of skeletal muscle mass. This is Ankyrin repeat and SOCS box protein 2 from Rattus norvegicus (Rat).